Reading from the N-terminus, the 194-residue chain is Protein GrpE (194 aa).

The interval 1–40 is disordered; the sequence is MSRKHHKEQEEIQEQETISAGAAETPAEETAAIPAATEAD. A compositionally biased stretch (low complexity) spans 20–38; that stretch reads AGAAETPAEETAAIPAATE.

Belongs to the GrpE family. In terms of assembly, homodimer.

The protein resides in the cytoplasm. In terms of biological role, participates actively in the response to hyperosmotic and heat shock by preventing the aggregation of stress-denatured proteins, in association with DnaK and GrpE. It is the nucleotide exchange factor for DnaK and may function as a thermosensor. Unfolded proteins bind initially to DnaJ; upon interaction with the DnaJ-bound protein, DnaK hydrolyzes its bound ATP, resulting in the formation of a stable complex. GrpE releases ADP from DnaK; ATP binding to DnaK triggers the release of the substrate protein, thus completing the reaction cycle. Several rounds of ATP-dependent interactions between DnaJ, DnaK and GrpE are required for fully efficient folding. The chain is Protein GrpE from Chlorobaculum tepidum (strain ATCC 49652 / DSM 12025 / NBRC 103806 / TLS) (Chlorobium tepidum).